The primary structure comprises 432 residues: Keratin, type I cytoskeletal 18-B (432 aa).

Low complexity predominate over residues 1-21 (MSYSRSMYSSSSVVGGSPYRS). Residues 1-44 (MSYSRSMYSSSSVVGGSPYRSLSSAPRFAPGSSAASVHAGPGGS) form a disordered region. Residues 2–82 (SYSRSMYSSS…NVSLMGGAQN (81 aa)) are head. Positions 83–118 (EKETMQDLNDRLASYLERVRSLETANKELEVQIRQH) are coil 1A. The IF rod domain maps to 83-393 (EKETMQDLND…RLLEGDSFDL (311 aa)). The tract at residues 119–134 (TEKKGPAKDWSPYYKA) is linker 1. The interval 135–226 (IEDLKKQVFD…KNHQDDVNEL (92 aa)) is coil 1B. The tract at residues 227–250 (QAQIARSAVTVEVDAPKSQDLGKI) is linker 12. The interval 251–388 (MAELRAQYDG…IHTYRRLLEG (138 aa)) is coil 2. The segment at 389–432 (DSFDLQDAVPTVTTQTVKKVITTTQRIVDGKVVAESNDTEVLKA) is tail.

It belongs to the intermediate filament family. In terms of assembly, heterotetramer of two type I and two type II keratins. Keratin-18 associates with keratin-8. Phosphorylated. In terms of processing, proteolytically cleaved by caspases during epithelial cell apoptosis.

Functionally, when phosphorylated, plays a role in filament reorganization. The polypeptide is Keratin, type I cytoskeletal 18-B (krt18-b) (Xenopus laevis (African clawed frog)).